A 184-amino-acid polypeptide reads, in one-letter code: Large ribosomal subunit protein uL5 (184 aa).

This sequence belongs to the universal ribosomal protein uL5 family. As to quaternary structure, part of the 50S ribosomal subunit; part of the 5S rRNA/L5/L18/L25 subcomplex. Contacts the 5S rRNA and the P site tRNA. Forms a bridge to the 30S subunit in the 70S ribosome.

Its function is as follows. This is one of the proteins that bind and probably mediate the attachment of the 5S RNA into the large ribosomal subunit, where it forms part of the central protuberance. In the 70S ribosome it contacts protein S13 of the 30S subunit (bridge B1b), connecting the 2 subunits; this bridge is implicated in subunit movement. Contacts the P site tRNA; the 5S rRNA and some of its associated proteins might help stabilize positioning of ribosome-bound tRNAs. This is Large ribosomal subunit protein uL5 from Corynebacterium kroppenstedtii (strain DSM 44385 / JCM 11950 / CIP 105744 / CCUG 35717).